The chain runs to 311 residues: Aquaporin-1 (311 aa).

Over 1–16 the chain is Cytoplasmic; that stretch reads MHPQVASLFDNVYEDL. A helical membrane pass occupies residues 17–37; sequence AAATLEFIGTAFFLLFGLGGI. At 38 to 56 the chain is on the extracellular side; the sequence is QASTAEDTASSQPPASGIE. A helical membrane pass occupies residues 57–77; sequence HVLYISTCMGFSLVVSAWLFF. Arg78 is a topological domain (cytoplasmic). A helical transmembrane segment spans residues 79–99; that stretch reads VTGGLFNPNISFALLLVGGLK. Residues 85-87 carry the NPA 1 motif; it reads NPN. Pro100 is a topological domain (extracellular). Residues 101-121 form a helical membrane-spanning segment; sequence LRFVLFCIAQLTGAIAGAAIV. Over 122 to 143 the chain is Cytoplasmic; that stretch reads RGLTSAPLSVNNVLQQGTSAAQ. A helical transmembrane segment spans residues 144-164; that stretch reads GVFIEMFITAALVLSVLMLAA. Topologically, residues 165 to 168 are extracellular; the sequence is EKHE. Residues 169-189 traverse the membrane as a helical segment; that stretch reads ATPFAPVGIGLTLFACHLFAV. At 190-215 the chain is on the cytoplasmic side; it reads YYTGAAMNSARAFGPAVISGFPEPQH. Residues 197 to 199 carry the NPA 2 motif; that stretch reads NSA. Residues 216–236 traverse the membrane as a helical segment; sequence WVYWVGPFLGSLLGAGFYATL. At 237-311 the chain is on the extracellular side; the sequence is KHYKYWRLNP…TSSRTNFSPV (75 aa). Residues 276-311 are disordered; the sequence is DEETRNGCASNEEGVRATGDEKSSNATSSRTNFSPV. Basic and acidic residues predominate over residues 288 to 298; it reads EGVRATGDEKS. Positions 299–311 are enriched in polar residues; sequence SNATSSRTNFSPV. N-linked (GlcNAc...) asparagine glycosylation occurs at Asn300.

It belongs to the MIP/aquaporin (TC 1.A.8) family.

It localises to the cell membrane. The catalysed reaction is H2O(in) = H2O(out). The enzyme catalyses H2O2(out) = H2O2(in). It catalyses the reaction nitric oxide(out) = nitric oxide(in). It carries out the reaction CO2(out) = CO2(in). In terms of biological role, water channel required to facilitate the transport of water across membranes. Also mediates the transport nitric oxide, hydrogen peroxide and carbon dioxide across the membrane. Required for Hartig net development in trembling aspen trees. Contributes in fungal cellular processes during the basidiocarp formation. This is Aquaporin-1 from Laccaria bicolor (Bicoloured deceiver).